A 96-amino-acid polypeptide reads, in one-letter code: Transcription and mRNA export factor ENY2 (96 aa).

The protein belongs to the ENY2 family. Component of the nuclear pore complex (NPC)-associated TREX-2 complex (transcription and export complex 2). Component of the SAGA transcription coactivator-HAT complex. Within the SAGA complex, participates in a subcomplex of SAGA called the DUB module (deubiquitination module).

Its subcellular location is the nucleus. The protein localises to the nucleoplasm. Functionally, involved in mRNA export coupled transcription activation by association with both the TREX-2 and the SAGA complexes. The transcription regulatory histone acetylation (HAT) complex SAGA is a multiprotein complex that activates transcription by remodeling chromatin and mediating histone acetylation and deubiquitination. Within the SAGA complex, participates in a subcomplex that specifically deubiquitinates histones. The SAGA complex is recruited to specific gene promoters by activators, where it is required for transcription. The TREX-2 complex functions in docking export-competent ribonucleoprotein particles (mRNPs) to the nuclear entrance of the nuclear pore complex (nuclear basket). TREX-2 participates in mRNA export and accurate chromatin positioning in the nucleus by tethering genes to the nuclear periphery. The sequence is that of Transcription and mRNA export factor ENY2 from Taeniopygia guttata (Zebra finch).